The chain runs to 66 residues: COP-associated protein (66 aa).

The HMA domain maps to 1-66 (MKVTFQVPSI…ALLDAGQEVV (66 aa)). Cys12 and Cys15 together coordinate Cu cation.

Its function is as follows. Part of a cation-transporting system which is associated with copper export out of the H.pylori cells. The chain is COP-associated protein (copP) from Helicobacter pylori (strain J99 / ATCC 700824) (Campylobacter pylori J99).